Here is a 404-residue protein sequence, read N- to C-terminus: Cysteine desulfurase IscS (404 aa).

Residues 75–76, Asn155, Gln183, and 203–205 each bind pyridoxal 5'-phosphate; these read AT and SAH. Lys206 carries the N6-(pyridoxal phosphate)lysine modification. Residue Thr243 coordinates pyridoxal 5'-phosphate. Residue Cys328 is the Cysteine persulfide intermediate of the active site. Cys328 is a binding site for [2Fe-2S] cluster.

It belongs to the class-V pyridoxal-phosphate-dependent aminotransferase family. NifS/IscS subfamily. Homodimer. Forms a heterotetramer with IscU, interacts with other sulfur acceptors. Requires pyridoxal 5'-phosphate as cofactor.

The protein resides in the cytoplasm. The enzyme catalyses (sulfur carrier)-H + L-cysteine = (sulfur carrier)-SH + L-alanine. Its pathway is cofactor biosynthesis; iron-sulfur cluster biosynthesis. Functionally, master enzyme that delivers sulfur to a number of partners involved in Fe-S cluster assembly, tRNA modification or cofactor biosynthesis. Catalyzes the removal of elemental sulfur atoms from cysteine to produce alanine. Functions as a sulfur delivery protein for Fe-S cluster synthesis onto IscU, an Fe-S scaffold assembly protein, as well as other S acceptor proteins. This chain is Cysteine desulfurase IscS, found in Pseudomonas fluorescens (strain ATCC BAA-477 / NRRL B-23932 / Pf-5).